A 103-amino-acid chain; its full sequence is Large ribosomal subunit protein bL21 (103 aa).

Belongs to the bacterial ribosomal protein bL21 family. In terms of assembly, part of the 50S ribosomal subunit. Contacts protein L20.

In terms of biological role, this protein binds to 23S rRNA in the presence of protein L20. The protein is Large ribosomal subunit protein bL21 of Lactobacillus helveticus (strain DPC 4571).